We begin with the raw amino-acid sequence, 180 residues long: Protein SPMIP9 (180 aa).

Microtubule inner protein component of sperm flagellar doublet microtubules. As to expression, testis-specific. Detected in the germ cell lineage at all stages.

The protein localises to the nucleus. It localises to the cytoplasm. It is found in the cytoskeleton. The protein resides in the flagellum axoneme. In terms of biological role, microtubule inner protein (MIP) part of the dynein-decorated doublet microtubules (DMTs) in flagella axoneme. The protein is Protein SPMIP9 of Homo sapiens (Human).